We begin with the raw amino-acid sequence, 285 residues long: Bis(5'-nucleosyl)-tetraphosphatase, symmetrical (285 aa).

Belongs to the Ap4A hydrolase family.

It carries out the reaction P(1),P(4)-bis(5'-adenosyl) tetraphosphate + H2O = 2 ADP + 2 H(+). Hydrolyzes diadenosine 5',5'''-P1,P4-tetraphosphate to yield ADP. This chain is Bis(5'-nucleosyl)-tetraphosphatase, symmetrical, found in Colwellia psychrerythraea (strain 34H / ATCC BAA-681) (Vibrio psychroerythus).